Consider the following 591-residue polypeptide: Aspartate--tRNA(Asp/Asn) ligase (591 aa).

E175 is a binding site for L-aspartate. The interval 199–202 (QQFK) is aspartate. L-aspartate is bound by residues R221 and H453. 221-223 (RDE) serves as a coordination point for ATP. E486 is an ATP binding site. R493 contacts L-aspartate. An ATP-binding site is contributed by 538–541 (GIDR).

The protein belongs to the class-II aminoacyl-tRNA synthetase family. Type 1 subfamily. Homodimer.

The protein localises to the cytoplasm. It carries out the reaction tRNA(Asx) + L-aspartate + ATP = L-aspartyl-tRNA(Asx) + AMP + diphosphate. Aspartyl-tRNA synthetase with relaxed tRNA specificity since it is able to aspartylate not only its cognate tRNA(Asp) but also tRNA(Asn). Reaction proceeds in two steps: L-aspartate is first activated by ATP to form Asp-AMP and then transferred to the acceptor end of tRNA(Asp/Asn). The chain is Aspartate--tRNA(Asp/Asn) ligase from Paracoccus denitrificans (strain Pd 1222).